The primary structure comprises 368 residues: Aminomethyltransferase (368 aa).

The protein belongs to the GcvT family. As to quaternary structure, the glycine cleavage system is composed of four proteins: P, T, L and H.

The enzyme catalyses N(6)-[(R)-S(8)-aminomethyldihydrolipoyl]-L-lysyl-[protein] + (6S)-5,6,7,8-tetrahydrofolate = N(6)-[(R)-dihydrolipoyl]-L-lysyl-[protein] + (6R)-5,10-methylene-5,6,7,8-tetrahydrofolate + NH4(+). In terms of biological role, the glycine cleavage system catalyzes the degradation of glycine. This is Aminomethyltransferase from Xylella fastidiosa (strain M12).